A 282-amino-acid chain; its full sequence is Energy-coupling factor transporter ATP-binding protein EcfA1 (282 aa).

The ABC transporter domain occupies 6 to 243 (ISFDHVTFTY…VEMLKRIGLD (238 aa)). ATP is bound at residue 40-47 (GHNGSGKS).

This sequence belongs to the ABC transporter superfamily. Energy-coupling factor EcfA family. In terms of assembly, forms a stable energy-coupling factor (ECF) transporter complex composed of 2 membrane-embedded substrate-binding proteins (S component), 2 ATP-binding proteins (A component) and 2 transmembrane proteins (T component).

Its subcellular location is the cell membrane. In terms of biological role, ATP-binding (A) component of a common energy-coupling factor (ECF) ABC-transporter complex. Unlike classic ABC transporters this ECF transporter provides the energy necessary to transport a number of different substrates. This chain is Energy-coupling factor transporter ATP-binding protein EcfA1, found in Lactobacillus delbrueckii subsp. bulgaricus (strain ATCC 11842 / DSM 20081 / BCRC 10696 / JCM 1002 / NBRC 13953 / NCIMB 11778 / NCTC 12712 / WDCM 00102 / Lb 14).